A 441-amino-acid chain; its full sequence is Serine carboxypeptidase-like 4 (441 aa).

Residues 1–29 form the signal peptide; it reads MANNNVYSVLKSLLLLLHLVFLSKQHVDS. Intrachain disulfides connect Cys-88–Cys-331, Cys-252–Cys-266, and Cys-290–Cys-297. A glycan (N-linked (GlcNAc...) asparagine) is linked at Asn-109. The active site involves Ser-184. Asn-350 carries an N-linked (GlcNAc...) asparagine glycan. Residue Asp-366 is part of the active site. N-linked (GlcNAc...) asparagine glycosylation is present at Asn-382. Residue His-419 is part of the active site.

Belongs to the peptidase S10 family. As to expression, ubiquitous.

Its subcellular location is the secreted. Its function is as follows. Probable carboxypeptidase. This is Serine carboxypeptidase-like 4 (SCPL4) from Arabidopsis thaliana (Mouse-ear cress).